A 132-amino-acid polypeptide reads, in one-letter code: Small ribosomal subunit protein uS8 (132 aa).

The protein belongs to the universal ribosomal protein uS8 family. In terms of assembly, part of the 30S ribosomal subunit. Contacts proteins S5 and S12.

One of the primary rRNA binding proteins, it binds directly to 16S rRNA central domain where it helps coordinate assembly of the platform of the 30S subunit. The protein is Small ribosomal subunit protein uS8 of Natranaerobius thermophilus (strain ATCC BAA-1301 / DSM 18059 / JW/NM-WN-LF).